Here is a 346-residue protein sequence, read N- to C-terminus: Probable aldo-keto reductase 2 (346 aa).

Tyr63 functions as the Proton donor in the catalytic mechanism. Position 131 (His131) interacts with substrate. 210–220 lines the NADP(+) pocket; the sequence is SPLGRGFLAAG.

The protein belongs to the aldo/keto reductase family. Aldo/keto reductase 13 subfamily.

The chain is Probable aldo-keto reductase 2 (AGD2) from Arabidopsis thaliana (Mouse-ear cress).